The sequence spans 266 residues: Undecaprenyl-diphosphatase (266 aa).

The next 8 helical transmembrane spans lie at 1–21 (MTLT…FLPI), 39–59 (QGLA…MIYF), 87–107 (WWVI…KAFI), 111–131 (ARSA…LWYA), 150–172 (LIVG…ITMT), 187–207 (FSFL…TLDL), 218–238 (ALIV…YLFL), and 244–264 (IGML…LLFV).

It belongs to the UppP family.

Its subcellular location is the cell inner membrane. The enzyme catalyses di-trans,octa-cis-undecaprenyl diphosphate + H2O = di-trans,octa-cis-undecaprenyl phosphate + phosphate + H(+). Catalyzes the dephosphorylation of undecaprenyl diphosphate (UPP). Confers resistance to bacitracin. This Pseudoalteromonas atlantica (strain T6c / ATCC BAA-1087) protein is Undecaprenyl-diphosphatase.